A 193-amino-acid polypeptide reads, in one-letter code: NADH-quinone oxidoreductase subunit B (193 aa).

Positions 72, 73, 137, and 167 each coordinate [4Fe-4S] cluster.

The protein belongs to the complex I 20 kDa subunit family. As to quaternary structure, NDH-1 is composed of 14 different subunits. Subunits NuoB, C, D, E, F, and G constitute the peripheral sector of the complex. Requires [4Fe-4S] cluster as cofactor.

It localises to the cell inner membrane. The catalysed reaction is a quinone + NADH + 5 H(+)(in) = a quinol + NAD(+) + 4 H(+)(out). Functionally, NDH-1 shuttles electrons from NADH, via FMN and iron-sulfur (Fe-S) centers, to quinones in the respiratory chain. Couples the redox reaction to proton translocation (for every two electrons transferred, four hydrogen ions are translocated across the cytoplasmic membrane), and thus conserves the redox energy in a proton gradient. This is NADH-quinone oxidoreductase subunit B from Brucella abortus (strain S19).